We begin with the raw amino-acid sequence, 156 residues long: Regulatory protein RecX (156 aa).

The protein belongs to the RecX family.

It is found in the cytoplasm. Modulates RecA activity. The chain is Regulatory protein RecX from Pseudomonas putida (strain GB-1).